Consider the following 581-residue polypeptide: Probable peptidoglycan D,D-transpeptidase PenA (581 aa).

The helical transmembrane segment at 28-48 (ISFVLMAMAVLFACLIARGLY) threads the bilayer. Serine 310 serves as the catalytic Acyl-ester intermediate.

It belongs to the transpeptidase family. FtsI subfamily.

It is found in the cell inner membrane. It catalyses the reaction Preferential cleavage: (Ac)2-L-Lys-D-Ala-|-D-Ala. Also transpeptidation of peptidyl-alanyl moieties that are N-acyl substituents of D-alanine.. It participates in cell wall biogenesis; peptidoglycan biosynthesis. Catalyzes cross-linking of the peptidoglycan cell wall at the division septum. This chain is Probable peptidoglycan D,D-transpeptidase PenA, found in Neisseria gonorrhoeae.